Here is a 100-residue protein sequence, read N- to C-terminus: Large ribosomal subunit protein eL30 (100 aa).

The protein belongs to the eukaryotic ribosomal protein eL30 family.

This Thermococcus sibiricus (strain DSM 12597 / MM 739) protein is Large ribosomal subunit protein eL30.